The sequence spans 85 residues: Small ribosomal subunit protein bS16 (85 aa).

The protein belongs to the bacterial ribosomal protein bS16 family.

In Xanthomonas oryzae pv. oryzae (strain PXO99A), this protein is Small ribosomal subunit protein bS16.